Consider the following 447-residue polypeptide: Lipid II isoglutaminyl synthase (glutamine-hydrolyzing) subunit MurT (447 aa).

Zn(2+) is bound by residues Cys-205, Cys-208, Cys-227, and Cys-230. Residue Asp-355 is part of the active site.

Belongs to the MurCDEF family. MurT subfamily. In terms of assembly, forms a heterodimer with GatD.

The enzyme catalyses beta-D-GlcNAc-(1-&gt;4)-Mur2Ac(oyl-L-Ala-gamma-D-Glu-L-Lys-D-Ala-D-Ala)-di-trans,octa-cis-undecaprenyl diphosphate + L-glutamine + ATP + H2O = beta-D-GlcNAc-(1-&gt;4)-Mur2Ac(oyl-L-Ala-D-isoglutaminyl-L-Lys-D-Ala-D-Ala)-di-trans,octa-cis-undecaprenyl diphosphate + L-glutamate + ADP + phosphate + H(+). The catalysed reaction is beta-D-GlcNAc-(1-&gt;4)-Mur2Ac(oyl-L-Ala-gamma-D-Glu-L-Lys-D-Ala-D-Ala)-di-trans,octa-cis-undecaprenyl diphosphate + ATP = beta-D-GlcNAc-(1-&gt;4)-Mur2Ac(oyl-L-Ala-gamma-D-O-P-Glu-L-Lys-D-Ala-D-Ala)-di-trans,octa-cis-undecaprenyl diphosphate + ADP. It catalyses the reaction beta-D-GlcNAc-(1-&gt;4)-Mur2Ac(oyl-L-Ala-gamma-D-O-P-Glu-L-Lys-D-Ala-D-Ala)-di-trans,octa-cis-undecaprenyl diphosphate + NH4(+) = beta-D-GlcNAc-(1-&gt;4)-Mur2Ac(oyl-L-Ala-D-isoglutaminyl-L-Lys-D-Ala-D-Ala)-di-trans,octa-cis-undecaprenyl diphosphate + phosphate + H(+). It participates in cell wall biogenesis; peptidoglycan biosynthesis. Functionally, the lipid II isoglutaminyl synthase complex catalyzes the formation of alpha-D-isoglutamine in the cell wall lipid II stem peptide. The MurT subunit catalyzes the ATP-dependent amidation of D-glutamate residue of lipid II, converting it to an isoglutamine residue. This chain is Lipid II isoglutaminyl synthase (glutamine-hydrolyzing) subunit MurT, found in Streptococcus pneumoniae (strain ATCC BAA-255 / R6).